The following is a 341-amino-acid chain: Glycerol-3-phosphate dehydrogenase [NAD(P)+] (341 aa).

NADPH contacts are provided by S12, W13, R33, and K107. Residues K107, G134, and T136 each contribute to the sn-glycerol 3-phosphate site. A138 provides a ligand contact to NADPH. Sn-glycerol 3-phosphate is bound by residues K189, D242, S252, R253, and N254. Residue K189 is the Proton acceptor of the active site. R253 is an NADPH binding site. NADPH-binding residues include V277 and E279.

It belongs to the NAD-dependent glycerol-3-phosphate dehydrogenase family.

It is found in the cytoplasm. It catalyses the reaction sn-glycerol 3-phosphate + NAD(+) = dihydroxyacetone phosphate + NADH + H(+). The catalysed reaction is sn-glycerol 3-phosphate + NADP(+) = dihydroxyacetone phosphate + NADPH + H(+). Its pathway is membrane lipid metabolism; glycerophospholipid metabolism. Its function is as follows. Catalyzes the reduction of the glycolytic intermediate dihydroxyacetone phosphate (DHAP) to sn-glycerol 3-phosphate (G3P), the key precursor for phospholipid synthesis. The chain is Glycerol-3-phosphate dehydrogenase [NAD(P)+] from Halothermothrix orenii (strain H 168 / OCM 544 / DSM 9562).